The chain runs to 474 residues: Siroheme synthase (474 aa).

Residues 1–203 form a precorrin-2 dehydrogenase /sirohydrochlorin ferrochelatase region; that stretch reads MKLFPLFADL…QRPEEAERLL (203 aa). NAD(+) contacts are provided by residues 22 to 23 and 43 to 44; these read EI and PA. Phosphoserine is present on S128. The segment at 216 to 474 is uroporphyrinogen-III C-methyltransferase; sequence GSVVLVGAGP…QRPAPAALAA (259 aa). Position 225 (P225) interacts with S-adenosyl-L-methionine. The Proton acceptor role is filled by D248. K270 serves as the catalytic Proton donor. S-adenosyl-L-methionine contacts are provided by residues 302 to 304, I307, 332 to 333, M384, and G413; these read GGD and TA.

It in the N-terminal section; belongs to the precorrin-2 dehydrogenase / sirohydrochlorin ferrochelatase family. This sequence in the C-terminal section; belongs to the precorrin methyltransferase family.

It catalyses the reaction uroporphyrinogen III + 2 S-adenosyl-L-methionine = precorrin-2 + 2 S-adenosyl-L-homocysteine + H(+). The catalysed reaction is precorrin-2 + NAD(+) = sirohydrochlorin + NADH + 2 H(+). The enzyme catalyses siroheme + 2 H(+) = sirohydrochlorin + Fe(2+). The protein operates within cofactor biosynthesis; adenosylcobalamin biosynthesis; precorrin-2 from uroporphyrinogen III: step 1/1. It participates in cofactor biosynthesis; adenosylcobalamin biosynthesis; sirohydrochlorin from precorrin-2: step 1/1. Its pathway is porphyrin-containing compound metabolism; siroheme biosynthesis; precorrin-2 from uroporphyrinogen III: step 1/1. It functions in the pathway porphyrin-containing compound metabolism; siroheme biosynthesis; siroheme from sirohydrochlorin: step 1/1. The protein operates within porphyrin-containing compound metabolism; siroheme biosynthesis; sirohydrochlorin from precorrin-2: step 1/1. Its function is as follows. Multifunctional enzyme that catalyzes the SAM-dependent methylations of uroporphyrinogen III at position C-2 and C-7 to form precorrin-2 via precorrin-1. Then it catalyzes the NAD-dependent ring dehydrogenation of precorrin-2 to yield sirohydrochlorin. Finally, it catalyzes the ferrochelation of sirohydrochlorin to yield siroheme. In Bordetella petrii (strain ATCC BAA-461 / DSM 12804 / CCUG 43448), this protein is Siroheme synthase.